The chain runs to 675 residues: G-protein-signaling modulator 1 (675 aa).

Positions 1-509 (MAGPAPPVAD…DLLTKFQSSR (509 aa)) are mediates association with membranes. TPR repeat units lie at residues 28–61 (CLEL…GTED), 66–99 (SAIY…ARTI), 106–139 (AKAS…AQEQ), 146–181 (ARAL…PPDV), 183–202 (ETLC…VKEL), 209–242 (GRAY…AKEF), 249–282 (RRAY…SRQL), 289–322 (AQAC…AQEL), and 329–362 (GRAC…SQEI). Residues 364–487 (DRHGELTARM…VRVHVPRTSI (124 aa)) are interaction with STK11/LKB1. The interval 391–412 (SEKPDLAGYEAQGARPKRTQRL) is disordered. Phosphoserine is present on serine 413. The residue at position 421 (arginine 421) is an Omega-N-methylarginine. A compositionally biased stretch (basic and acidic residues) spans 424–442 (LEREQNGDSHHSGDWRGPS). The segment at 424 to 492 (LEREQNGDSH…PRTSIPRAPS (69 aa)) is disordered. Phosphoserine is present on residues serine 445, serine 469, serine 471, serine 492, and serine 493. A compositionally biased stretch (basic and acidic residues) spans 454-469 (KYQEGPDAERRPREGS). The 23-residue stretch at 495–517 (EECFFDLLTKFQSSRMDDQRCPL) folds into the GoLoco 1 domain. A phosphoserine mark is found at serine 545 and serine 569. GoLoco domains are found at residues 548–570 (TEEF…RASV), 596–618 (GDDF…RCPP), and 630–652 (DEDF…RVDL). Disordered regions lie at residues 610–630 (RIDD…TMPD) and 644–675 (RMDE…PGAS).

It belongs to the GPSM family. In terms of assembly, interacts with GNAI1, GNAI2 and GNAI3 preferentially in their GDP-bound state. May also interact with GNAO1. Interacts with STK11/LKB1 and MACF1. Interacts with INSC/inscuteable and FRMPD1. Phosphorylation regulates interaction with G(i/o) alpha. In terms of tissue distribution, expressed in intestinal cells.

The protein resides in the cytoplasm. The protein localises to the cytosol. Its subcellular location is the endoplasmic reticulum membrane. It is found in the golgi apparatus membrane. It localises to the cell membrane. Guanine nucleotide dissociation inhibitor (GDI) which functions as a receptor-independent activator of heterotrimeric G-protein signaling. Keeps G(i/o) alpha subunit in its GDP-bound form thus uncoupling heterotrimeric G-proteins signaling from G protein-coupled receptors. Controls spindle orientation and asymmetric cell fate of cerebral cortical progenitors. May also be involved in macroautophagy in intestinal cells. May play a role in drug addiction. The polypeptide is G-protein-signaling modulator 1 (GPSM1) (Homo sapiens (Human)).